A 483-amino-acid polypeptide reads, in one-letter code: Dihydrolipoyllysine-residue acetyltransferase component of pyruvate dehydrogenase complex, mitochondrial (483 aa).

A mitochondrion-targeting transit peptide spans 1-28 (MLSANMLRRMHHGVAVTRMLLVSNGKVQ). The Lipoyl-binding domain occupies 53 to 129 (HTVINMPALS…PVGKPLAVTV (77 aa)). The residue at position 94 (Lys94) is an N6-lipoyllysine. Disordered stretches follow at residues 143 to 187 (IEDS…DRVF) and 234 to 254 (EAAA…APGD). The span at 146–160 (SSAKEPSAKSGEEKS) shows a compositional bias: basic and acidic residues. Residues 161–178 (APSSEKQSKETSSPSNVS) are compositionally biased toward polar residues. One can recognise a Peripheral subunit-binding (PSBD) domain in the interval 187-224 (FASPLARKLAEEKDLDLSQIRGSGPNGRIIKVDIENFK). Over residues 235–252 (AAAKATTPAASAADAAAP) the composition is skewed to low complexity. Active-site residues include His456 and Asp460.

This sequence belongs to the 2-oxoacid dehydrogenase family. It depends on (R)-lipoate as a cofactor.

It localises to the mitochondrion matrix. The enzyme catalyses N(6)-[(R)-dihydrolipoyl]-L-lysyl-[protein] + acetyl-CoA = N(6)-[(R)-S(8)-acetyldihydrolipoyl]-L-lysyl-[protein] + CoA. In terms of biological role, the pyruvate dehydrogenase complex catalyzes the overall conversion of pyruvate to acetyl-CoA and CO(2). It contains multiple copies of three enzymatic components: pyruvate dehydrogenase (E1), dihydrolipoamide acetyltransferase (E2) and lipoamide dehydrogenase (E3). This chain is Dihydrolipoyllysine-residue acetyltransferase component of pyruvate dehydrogenase complex, mitochondrial, found in Schizosaccharomyces pombe (strain 972 / ATCC 24843) (Fission yeast).